The sequence spans 155 residues: Methylated-DNA--protein-cysteine methyltransferase (155 aa).

Catalysis depends on cysteine 119, which acts as the Nucleophile; methyl group acceptor.

The protein belongs to the MGMT family.

Its subcellular location is the cytoplasm. The catalysed reaction is a 6-O-methyl-2'-deoxyguanosine in DNA + L-cysteinyl-[protein] = S-methyl-L-cysteinyl-[protein] + a 2'-deoxyguanosine in DNA. The enzyme catalyses a 4-O-methyl-thymidine in DNA + L-cysteinyl-[protein] = a thymidine in DNA + S-methyl-L-cysteinyl-[protein]. In terms of biological role, involved in the cellular defense against the biological effects of O6-methylguanine (O6-MeG) and O4-methylthymine (O4-MeT) in DNA. Repairs the methylated nucleobase in DNA by stoichiometrically transferring the methyl group to a cysteine residue in the enzyme. This is a suicide reaction: the enzyme is irreversibly inactivated. The sequence is that of Methylated-DNA--protein-cysteine methyltransferase from Sulfolobus acidocaldarius (strain ATCC 33909 / DSM 639 / JCM 8929 / NBRC 15157 / NCIMB 11770).